Consider the following 183-residue polypeptide: ATP synthase subunit b, chloroplastic (183 aa).

A helical membrane pass occupies residues 20–42 (INTNVFETNIINLAIVVGTLFYY).

It belongs to the ATPase B chain family. In terms of assembly, F-type ATPases have 2 components, F(1) - the catalytic core - and F(0) - the membrane proton channel. F(1) has five subunits: alpha(3), beta(3), gamma(1), delta(1), epsilon(1). F(0) has four main subunits: a(1), b(1), b'(1) and c(10-14). The alpha and beta chains form an alternating ring which encloses part of the gamma chain. F(1) is attached to F(0) by a central stalk formed by the gamma and epsilon chains, while a peripheral stalk is formed by the delta, b and b' chains.

Its subcellular location is the plastid. It localises to the chloroplast thylakoid membrane. In terms of biological role, f(1)F(0) ATP synthase produces ATP from ADP in the presence of a proton or sodium gradient. F-type ATPases consist of two structural domains, F(1) containing the extramembraneous catalytic core and F(0) containing the membrane proton channel, linked together by a central stalk and a peripheral stalk. During catalysis, ATP synthesis in the catalytic domain of F(1) is coupled via a rotary mechanism of the central stalk subunits to proton translocation. Component of the F(0) channel, it forms part of the peripheral stalk, linking F(1) to F(0). This is ATP synthase subunit b, chloroplastic from Euglena gracilis.